The primary structure comprises 331 residues: Porphobilinogen deaminase (331 aa).

C248 carries the post-translational modification S-(dipyrrolylmethanemethyl)cysteine. Residues 307 to 331 (QLLQAPKQTGEPHDPDRHDKGTGRP) are disordered. Over residues 316 to 331 (GEPHDPDRHDKGTGRP) the composition is skewed to basic and acidic residues.

This sequence belongs to the HMBS family. As to quaternary structure, monomer. It depends on dipyrromethane as a cofactor.

The enzyme catalyses 4 porphobilinogen + H2O = hydroxymethylbilane + 4 NH4(+). Its pathway is porphyrin-containing compound metabolism; protoporphyrin-IX biosynthesis; coproporphyrinogen-III from 5-aminolevulinate: step 2/4. In terms of biological role, tetrapolymerization of the monopyrrole PBG into the hydroxymethylbilane pre-uroporphyrinogen in several discrete steps. This is Porphobilinogen deaminase from Acidothermus cellulolyticus (strain ATCC 43068 / DSM 8971 / 11B).